Reading from the N-terminus, the 362-residue chain is Heme A synthase (362 aa).

A run of 5 helical transmembrane segments spans residues 11 to 31 (AAIR…VLVG), 102 to 122 (VIGM…AVSG), 128 to 148 (LWLI…MVAS), 159 to 179 (VRLA…VWTL), and 198 to 218 (AWAL…VAGL). H262 contacts heme. 3 helical membrane-spanning segments follow: residues 264–286 (MTAY…AGAG), 297–317 (LAAI…VVPI), and 318–338 (SLAL…VLQA). H323 is a binding site for heme.

The protein belongs to the COX15/CtaA family. Type 2 subfamily. Interacts with CtaB. It depends on heme b as a cofactor.

The protein localises to the cell membrane. The catalysed reaction is Fe(II)-heme o + 2 A + H2O = Fe(II)-heme a + 2 AH2. Its pathway is porphyrin-containing compound metabolism; heme A biosynthesis; heme A from heme O: step 1/1. Its function is as follows. Catalyzes the conversion of heme O to heme A by two successive hydroxylations of the methyl group at C8. The first hydroxylation forms heme I, the second hydroxylation results in an unstable dihydroxymethyl group, which spontaneously dehydrates, resulting in the formyl group of heme A. The protein is Heme A synthase of Bradyrhizobium sp. (strain ORS 278).